A 275-amino-acid chain; its full sequence is Diaminopimelate epimerase (275 aa).

3 residues coordinate substrate: Asn12, Gln45, and Asn65. Cys74 (proton donor) is an active-site residue. Substrate is bound by residues 75–76, Asn158, Asn191, and 209–210; these read GN and ER. Catalysis depends on Cys218, which acts as the Proton acceptor. 219-220 is a substrate binding site; that stretch reads GT.

Belongs to the diaminopimelate epimerase family. Homodimer.

It localises to the cytoplasm. The catalysed reaction is (2S,6S)-2,6-diaminopimelate = meso-2,6-diaminopimelate. The protein operates within amino-acid biosynthesis; L-lysine biosynthesis via DAP pathway; DL-2,6-diaminopimelate from LL-2,6-diaminopimelate: step 1/1. Its function is as follows. Catalyzes the stereoinversion of LL-2,6-diaminopimelate (L,L-DAP) to meso-diaminopimelate (meso-DAP), a precursor of L-lysine and an essential component of the bacterial peptidoglycan. In Shewanella sp. (strain MR-4), this protein is Diaminopimelate epimerase.